We begin with the raw amino-acid sequence, 521 residues long: GMP synthase [glutamine-hydrolyzing] (521 aa).

Positions 8-203 (KILILDFGAQ…VVDICGCQTL (196 aa)) constitute a Glutamine amidotransferase type-1 domain. Catalysis depends on C85, which acts as the Nucleophile. Active-site residues include H177 and E179. The GMPS ATP-PPase domain occupies 204-396 (WTAANIIDDQ…LGLPRTMVYR (193 aa)). ATP is bound at residue 231-237 (SGGVDSS).

Homodimer.

It catalyses the reaction XMP + L-glutamine + ATP + H2O = GMP + L-glutamate + AMP + diphosphate + 2 H(+). It functions in the pathway purine metabolism; GMP biosynthesis; GMP from XMP (L-Gln route): step 1/1. Functionally, catalyzes the synthesis of GMP from XMP. This chain is GMP synthase [glutamine-hydrolyzing], found in Xanthomonas oryzae pv. oryzae (strain MAFF 311018).